The sequence spans 405 residues: Probable tRNA sulfurtransferase (405 aa).

One can recognise a THUMP domain in the interval 60–165; it reads ETIDQRLKLV…QDAIYISNQL (106 aa). Residues 183 to 184, 208 to 209, arginine 265, glycine 287, and glutamine 296 contribute to the ATP site; these read ML and HF.

This sequence belongs to the ThiI family.

It localises to the cytoplasm. The catalysed reaction is [ThiI sulfur-carrier protein]-S-sulfanyl-L-cysteine + a uridine in tRNA + 2 reduced [2Fe-2S]-[ferredoxin] + ATP + H(+) = [ThiI sulfur-carrier protein]-L-cysteine + a 4-thiouridine in tRNA + 2 oxidized [2Fe-2S]-[ferredoxin] + AMP + diphosphate. The enzyme catalyses [ThiS sulfur-carrier protein]-C-terminal Gly-Gly-AMP + S-sulfanyl-L-cysteinyl-[cysteine desulfurase] + AH2 = [ThiS sulfur-carrier protein]-C-terminal-Gly-aminoethanethioate + L-cysteinyl-[cysteine desulfurase] + A + AMP + 2 H(+). Its pathway is cofactor biosynthesis; thiamine diphosphate biosynthesis. In terms of biological role, catalyzes the ATP-dependent transfer of a sulfur to tRNA to produce 4-thiouridine in position 8 of tRNAs, which functions as a near-UV photosensor. Also catalyzes the transfer of sulfur to the sulfur carrier protein ThiS, forming ThiS-thiocarboxylate. This is a step in the synthesis of thiazole, in the thiamine biosynthesis pathway. The sulfur is donated as persulfide by IscS. The sequence is that of Probable tRNA sulfurtransferase from Lactobacillus johnsonii (strain CNCM I-12250 / La1 / NCC 533).